The sequence spans 273 residues: Serine acetyltransferase (273 aa).

The protein belongs to the transferase hexapeptide repeat family. In terms of assembly, homohexamer. Dimer of a homotrimer.

Its subcellular location is the cytoplasm. The enzyme catalyses L-serine + acetyl-CoA = O-acetyl-L-serine + CoA. Its pathway is amino-acid biosynthesis; L-cysteine biosynthesis; L-cysteine from L-serine: step 1/2. This is Serine acetyltransferase (cysE) from Shigella flexneri.